Consider the following 112-residue polypeptide: uncharacterized protein (112 aa).

Residues 90-112 form a disordered region; that stretch reads KNFNNSKNDQIKKKKIDNNQVNL.

This is an uncharacterized protein from Buchnera aphidicola subsp. Acyrthosiphon pisum (strain APS) (Acyrthosiphon pisum symbiotic bacterium).